Here is a 194-residue protein sequence, read N- to C-terminus: uncharacterized protein (194 aa).

Disordered regions lie at residues 52–71 (KGRTTQSAINSENSDKEKYK) and 86–194 (AEAL…DGGS). 3 stretches are compositionally biased toward polar residues: residues 53–63 (GRTTQSAINSE), 98–111 (ALTSSKAANRSSTN), and 119–132 (IAHSTSRSRSTSPA). Over residues 133–169 (NRHRRKEKERTRSNHRHGSHRRHEPYRTHLSRHHRHS) the composition is skewed to basic residues. The segment covering 175–194 (SKRDDRYERRREHSPNDGGS) has biased composition (basic and acidic residues).

This is an uncharacterized protein from Schizosaccharomyces pombe (strain 972 / ATCC 24843) (Fission yeast).